A 983-amino-acid polypeptide reads, in one-letter code: Next to BRCA1 gene 1 protein (983 aa).

One can recognise a PB1 domain in the interval 4-86; sequence QVTLNVTFKN…NQLQMQVHEG (83 aa). The residue at position 117 (Ser117) is a Phosphoserine. Positions 126 to 149 are disordered; sequence MKTTEEPTAEARSPVPCDTDKPQD. A ZZ-type zinc finger spans residues 214–266; sequence SWHIACSHCQKRIVGVRYQCSLCPSYNICEDCEAGPYSHDTNHILLKFRRPVV. Zn(2+) contacts are provided by Cys219, Cys222, Cys233, Cys236, Cys242, Cys245, His252, and His256. ATG8 family proteins-binding regions lie at residues 544 to 638 and 745 to 756; these read ASER…PASV and ASSEDYIIILPE. The residue at position 588 (Thr588) is a Phosphothreonine. Phosphoserine occurs at positions 592 and 598. Residues 611 to 645 form a disordered region; it reads EESEGAGLKASPDSTVLTKRKAETPASVEETEEDL. The interval 768–813 is disordered; it reads MYSSALSQPGLERGAEGEPGIESGQEPAEARERLPERESQPKEQSI. The segment covering 795–808 has biased composition (basic and acidic residues); that stretch reads AEARERLPERESQP. Ser855 is modified (phosphoserine). Positions 867 to 894 are disordered; the sequence is DHVRGEPRGSTGLANSRQKSCDHSRHHN. The region spanning 930 to 974 is the UBA domain; sequence SEDQTAALMAHLFEMGFCDRQLNLRLLRKHNHNILQVVTELLQVN.

In terms of assembly, homooligomer and heterooligomer. Interacts with TRIM55. Interacts with titin/TTN. Interacts with RNF29, USP8, MAP1LC3A, MAP1LC3B, MAP1LC3C, GABARAP, GABARAPL1 and GABARAPL2. Binds to ubiquitin and ubiquitinated proteins. Interacts with SQSTM1. Interacts with TAX1BP1. Interacts with IRF3; this interaction mediates autophagic degradation of IRF3. Interacts with IL12A and IL12B. Phosphorylated by GSK3A; this phosphorylation inhibits NBR1 involvement in the formation of ubiquitinated protein aggregates.

It is found in the cytoplasm. The protein localises to the cytoplasmic vesicle. Its subcellular location is the autophagosome. It localises to the lysosome. The protein resides in the myofibril. It is found in the sarcomere. The protein localises to the m line. Ubiquitin-binding autophagy adapter that participates in different processes including host defense or intracellular homeostasis. Possesses a double function during the selective autophagy by acting as a shuttle bringing ubiquitinated proteins to autophagosomes and also by participating in the formation of protein aggregates. Plays a role in the regulation of the innate immune response by modulating type I interferon production and targeting ubiquitinated IRF3 for autophagic degradation. In response to oxidative stress, promotes an increase in SQSTM1 levels, phosphorylation, and body formation by preventing its autophagic degradation. In turn, activates the KEAP1-NRF2/NFE2L2 antioxidant pathway. Also plays non-autophagy role by mediating the shuttle of IL-12 to late endosome for subsequent secretion. This Rattus norvegicus (Rat) protein is Next to BRCA1 gene 1 protein (Nbr1).